The primary structure comprises 225 residues: Large ribosomal subunit protein mL58 (225 aa).

The tract at residues 106–138 (PQAPITTPESSSTDAAAADQHGDLPPVLYNPTK) is disordered. The span at 109 to 119 (PITTPESSSTD) shows a compositional bias: polar residues.

This sequence belongs to the mitochondrion-specific ribosomal protein mL58 family. As to quaternary structure, component of the mitochondrial large ribosomal subunit (mt-LSU). Mature N.crassa 74S mitochondrial ribosomes consist of a small (37S) and a large (54S) subunit. The 37S small subunit contains a 16S ribosomal RNA (16S mt-rRNA) and 32 different proteins. The 54S large subunit contains a 23S rRNA (23S mt-rRNA) and 42 different proteins.

Its subcellular location is the mitochondrion. Its function is as follows. Component of the mitochondrial ribosome (mitoribosome), a dedicated translation machinery responsible for the synthesis of mitochondrial genome-encoded proteins, including at least some of the essential transmembrane subunits of the mitochondrial respiratory chain. The mitoribosomes are attached to the mitochondrial inner membrane and translation products are cotranslationally integrated into the membrane. The sequence is that of Large ribosomal subunit protein mL58 (mrpl20) from Neurospora crassa (strain ATCC 24698 / 74-OR23-1A / CBS 708.71 / DSM 1257 / FGSC 987).